A 189-amino-acid polypeptide reads, in one-letter code: Probable nicotinate-nucleotide adenylyltransferase (189 aa).

It belongs to the NadD family.

The enzyme catalyses nicotinate beta-D-ribonucleotide + ATP + H(+) = deamido-NAD(+) + diphosphate. The protein operates within cofactor biosynthesis; NAD(+) biosynthesis; deamido-NAD(+) from nicotinate D-ribonucleotide: step 1/1. Functionally, catalyzes the reversible adenylation of nicotinate mononucleotide (NaMN) to nicotinic acid adenine dinucleotide (NaAD). The chain is Probable nicotinate-nucleotide adenylyltransferase from Staphylococcus aureus (strain USA300 / TCH1516).